We begin with the raw amino-acid sequence, 1032 residues long: Connector enhancer of kinase suppressor of ras 2 (1032 aa).

The region spanning W11–L76 is the SAM domain. Position 12 is a phosphoserine (S12). Residues N84–Y178 enclose the CRIC domain. The 83-residue stretch at V215–P297 folds into the PDZ domain. The DUF1170 domain maps to T302–L515. A compositionally biased stretch (low complexity) spans R324–P340. The tract at residues R324 to Q349 is disordered. 2 positions are modified to phosphoserine: S338 and S390. 2 disordered regions span residues E480–Y509 and F538–K558. A compositionally biased stretch (basic residues) spans H545–K558. The region spanning R570–A669 is the PH domain. Positions D682 to R766 are disordered. Y683 carries the phosphotyrosine modification. Acidic residues predominate over residues Y683–D693. A phosphoserine mark is found at S685 and S687. The segment covering D701–P714 has biased composition (pro residues). Over residues L730–S740 the composition is skewed to low complexity. A phosphoserine mark is found at S756 and S767. The segment at A864–E900 is disordered. A coiled-coil region spans residues P874–A917. A compositionally biased stretch (acidic residues) spans E875–A888. S906 is modified (phosphoserine).

Belongs to the CNKSR family. As to quaternary structure, interacts with RAF1, RAB2L and RAL GTPase proteins. Phosphorylated on tyrosine.

Its subcellular location is the cytoplasm. The protein resides in the membrane. Its function is as follows. May function as an adapter protein or regulator of Ras signaling pathways. In Mus musculus (Mouse), this protein is Connector enhancer of kinase suppressor of ras 2 (Cnksr2).